We begin with the raw amino-acid sequence, 1483 residues long: ABC multidrug transporter atrA (1483 aa).

Basic and acidic residues predominate over residues 1–19 (MASHKKSEDPLVVKDRQEQ). The disordered stretch occupies residues 1–92 (MASHKKSEDP…NDPAVDPQGP (92 aa)). N32 is a glycosylation site (N-linked (GlcNAc...) asparagine). The span at 71 to 82 (PTRTSTLATISE) shows a compositional bias: polar residues. N-linked (GlcNAc...) asparagine glycans are attached at residues N123 and N322. The 252-residue stretch at 147-398 (FRIGEMMKNR…FERQGWECPQ (252 aa)) folds into the ABC transporter 1 domain. 5 consecutive transmembrane segments (helical) span residues 512–532 (TVST…VFYG), 539–559 (GFTA…LIAM), 595–615 (IPVK…LAGL), 620–640 (GQFF…SAVF), and 654–674 (MGLA…VLPV). N718 carries an N-linked (GlcNAc...) asparagine glycan. The chain crosses the membrane as a helical span at residues 759 to 779 (FGILIAFLVGFMMIYFIATEL). N780 carries an N-linked (GlcNAc...) asparagine glycan. The ABC transporter 2 domain occupies 840-1083 (FTWRDVCYDI…LLNYFESNGA (244 aa)). ATP is bound at residue 876–883 (GVSGAGKT). 2 N-linked (GlcNAc...) asparagine glycosylation sites follow: N947 and N1146. 5 helical membrane-spanning segments follow: residues 1179–1199 (YIAS…FSFF), 1215–1235 (LFML…LFVT), 1254–1274 (AFLI…GILT), 1293–1313 (LVLL…HMAI), and 1320–1340 (ETAS…CGVM). The N-linked (GlcNAc...) asparagine glycan is linked to N1413. A helical membrane pass occupies residues 1444 to 1464 (FGLMWVYIVFNIFLATMLYYT). An N-linked (GlcNAc...) asparagine glycan is attached at N1471.

The protein belongs to the ABC transporter superfamily. ABCG family. PDR (TC 3.A.1.205) subfamily.

The protein localises to the cell membrane. The enzyme catalyses (R)-miconazole(in) + ATP + H2O = (R)-miconazole(out) + ADP + phosphate + H(+). In terms of biological role, pleiotropic ABC efflux transporter involved in the basal level of azole susceptibility. Confers resistance to miconazole and clotrimazole. This is ABC multidrug transporter atrA from Aspergillus oryzae (strain ATCC 42149 / RIB 40) (Yellow koji mold).